A 333-amino-acid polypeptide reads, in one-letter code: Biotin synthase (333 aa).

Residues 40–269 (YRVQLASLLS…HARVRLSAGR (230 aa)) enclose the Radical SAM core domain. The [4Fe-4S] cluster site is built by C55, C59, and C62. Residues C100, C132, C192, and R264 each contribute to the [2Fe-2S] cluster site.

Belongs to the radical SAM superfamily. Biotin synthase family. As to quaternary structure, homodimer. [4Fe-4S] cluster is required as a cofactor. It depends on [2Fe-2S] cluster as a cofactor.

The enzyme catalyses (4R,5S)-dethiobiotin + (sulfur carrier)-SH + 2 reduced [2Fe-2S]-[ferredoxin] + 2 S-adenosyl-L-methionine = (sulfur carrier)-H + biotin + 2 5'-deoxyadenosine + 2 L-methionine + 2 oxidized [2Fe-2S]-[ferredoxin]. Its pathway is cofactor biosynthesis; biotin biosynthesis; biotin from 7,8-diaminononanoate: step 2/2. Catalyzes the conversion of dethiobiotin (DTB) to biotin by the insertion of a sulfur atom into dethiobiotin via a radical-based mechanism. This chain is Biotin synthase, found in Synechococcus sp. (strain CC9902).